We begin with the raw amino-acid sequence, 360 residues long: Glyceraldehyde-3-phosphate dehydrogenase (360 aa).

NAD(+) contacts are provided by residues 13 to 14 (RI), Asp-35, and Arg-82. D-glyceraldehyde 3-phosphate-binding positions include 153–155 (SCT), Thr-184, 213–214 (TG), and Arg-236. Residue Cys-154 is the Nucleophile of the active site. Asn-318 lines the NAD(+) pocket.

Belongs to the glyceraldehyde-3-phosphate dehydrogenase family. In terms of assembly, homotetramer.

The enzyme catalyses D-glyceraldehyde 3-phosphate + phosphate + NAD(+) = (2R)-3-phospho-glyceroyl phosphate + NADH + H(+). It functions in the pathway carbohydrate degradation; glycolysis; pyruvate from D-glyceraldehyde 3-phosphate: step 1/5. In terms of biological role, key enzyme in glycolysis that catalyzes the first step of the pathway by converting D-glyceraldehyde 3-phosphate (G3P) into 3-phospho-D-glyceroyl phosphate. Essential for the maintenance of cellular ATP levels and carbohydrate metabolism. The polypeptide is Glyceraldehyde-3-phosphate dehydrogenase (Atriplex nummularia (Old man saltbush)).